The sequence spans 127 residues: Sulfiredoxin (127 aa).

The protein belongs to the sulfiredoxin family. Mg(2+) serves as cofactor. In terms of processing, forms a transient disulfide bond with TSA1 during the reduction of cysteine sulfinic acid (-SO2H).

It localises to the cytoplasm. The protein resides in the nucleus. It carries out the reaction S-hydroxy-S-oxy-L-cysteinyl-[peroxiredoxin] + [protein]-dithiol + ATP = S-hydroxy-L-cysteinyl-[peroxiredoxin] + [protein]-disulfide + ADP + phosphate. Its function is as follows. Contributes to oxidative stress resistance by reducing cysteine-sulfinic acid formed under exposure to oxidants in the peroxiredoxin TSA1. May catalyze the reduction in a multi-step process by acting both as a specific phosphotransferase and as thioltransferase. The chain is Sulfiredoxin from Saccharomyces cerevisiae (strain ATCC 204508 / S288c) (Baker's yeast).